The following is a 385-amino-acid chain: Acetate kinase (385 aa).

Residue asparagine 9 participates in Mg(2+) binding. Lysine 16 is an ATP binding site. Arginine 87 lines the substrate pocket. Aspartate 144 serves as the catalytic Proton donor/acceptor. ATP-binding positions include histidine 202–glycine 206 and aspartate 277–arginine 279. Glutamate 373 contacts Mg(2+).

Belongs to the acetokinase family. In terms of assembly, homodimer. Mg(2+) is required as a cofactor. It depends on Mn(2+) as a cofactor.

The protein localises to the cytoplasm. It catalyses the reaction acetate + ATP = acetyl phosphate + ADP. Its pathway is metabolic intermediate biosynthesis; acetyl-CoA biosynthesis; acetyl-CoA from acetate: step 1/2. In terms of biological role, catalyzes the formation of acetyl phosphate from acetate and ATP. Can also catalyze the reverse reaction. This chain is Acetate kinase, found in Rickettsia prowazekii (strain Madrid E).